The primary structure comprises 571 residues: Wee1-like protein kinase 1-A (571 aa).

A disordered region spans residues 1–101 (MSLQPVPHRL…PDCPGTPPHK (101 aa)). Over residues 81-98 (PASPPGPAASPPDCPGTP) the composition is skewed to pro residues. A Protein kinase domain is found at 224 to 494 (FHELEKIGSG…SMALVKHSVL (271 aa)). Residues 230–238 (IGSGEFGSV) and K253 each bind ATP. The active-site Proton acceptor is the D351. Residues N356 and D388 each coordinate Mg(2+). A coiled-coil region spans residues 500-539 (KNAEQLRIELNAEKFKNALLQKELKKAQIAKAAAEERALF).

The protein belongs to the protein kinase superfamily. Ser/Thr protein kinase family. WEE1 subfamily. In terms of tissue distribution, zygotically expressed. Expressed in regions of the embryo that are devoid of mitotic cells, such as the involuting mesoderm.

It localises to the nucleus. It catalyses the reaction L-tyrosyl-[protein] + ATP = O-phospho-L-tyrosyl-[protein] + ADP + H(+). In terms of biological role, acts as a zygotic negative regulator of entry into mitosis (G2 to M transition) by protecting the nucleus from cytoplasmically activated cyclin B1-complexed cdk1 before the onset of mitosis by mediating phosphorylation of cdk1 on 'Tyr-15'. Specifically phosphorylates and inactivates cyclin B1-complexed cdk1 reaching a maximum during G2 phase and a minimum as cells enter M phase. Phosphorylation of cyclin B1-cdk1 occurs exclusively on 'Tyr-15' and phosphorylation of monomeric cdk1 does not occur. Involved in convergent extension of the paraxial mesoderm during neurulation by inhibiting the cell cycle. This is Wee1-like protein kinase 1-A (wee1-a) from Xenopus laevis (African clawed frog).